The primary structure comprises 202 residues: NADH-quinone oxidoreductase subunit B 2 (202 aa).

The [4Fe-4S] cluster site is built by C38, C39, C104, and C133.

This sequence belongs to the complex I 20 kDa subunit family. In terms of assembly, NDH-1 is composed of 14 different subunits. Subunits NuoB, C, D, E, F, and G constitute the peripheral sector of the complex. Requires [4Fe-4S] cluster as cofactor.

It localises to the cell inner membrane. The enzyme catalyses a quinone + NADH + 5 H(+)(in) = a quinol + NAD(+) + 4 H(+)(out). In terms of biological role, NDH-1 shuttles electrons from NADH, via FMN and iron-sulfur (Fe-S) centers, to quinones in the respiratory chain. The immediate electron acceptor for the enzyme in this species is believed to be ubiquinone. Couples the redox reaction to proton translocation (for every two electrons transferred, four hydrogen ions are translocated across the cytoplasmic membrane), and thus conserves the redox energy in a proton gradient. This Koribacter versatilis (strain Ellin345) protein is NADH-quinone oxidoreductase subunit B 2.